Reading from the N-terminus, the 126-residue chain is Small ribosomal subunit protein uS12 (126 aa).

The segment covering 1–16 (MPTVNQLVRQGRTMNK) has biased composition (polar residues). A disordered region spans residues 1-24 (MPTVNQLVRQGRTMNKTKTKSPAL). At Asp89 the chain carries 3-methylthioaspartic acid.

This sequence belongs to the universal ribosomal protein uS12 family. Part of the 30S ribosomal subunit. Contacts proteins S8 and S17. May interact with IF1 in the 30S initiation complex.

Functionally, with S4 and S5 plays an important role in translational accuracy. Interacts with and stabilizes bases of the 16S rRNA that are involved in tRNA selection in the A site and with the mRNA backbone. Located at the interface of the 30S and 50S subunits, it traverses the body of the 30S subunit contacting proteins on the other side and probably holding the rRNA structure together. The combined cluster of proteins S8, S12 and S17 appears to hold together the shoulder and platform of the 30S subunit. The polypeptide is Small ribosomal subunit protein uS12 (Elusimicrobium minutum (strain Pei191)).